A 685-amino-acid polypeptide reads, in one-letter code: UvrABC system protein B (685 aa).

A Helicase ATP-binding domain is found at D30–R188. G43–T50 contributes to the ATP binding site. A Beta-hairpin motif is present at residues Y96–I119. Positions Q435–L597 constitute a Helicase C-terminal domain. The 36-residue stretch at Y641–G676 folds into the UVR domain.

The protein belongs to the UvrB family. In terms of assembly, forms a heterotetramer with UvrA during the search for lesions. Interacts with UvrC in an incision complex.

It localises to the cytoplasm. In terms of biological role, the UvrABC repair system catalyzes the recognition and processing of DNA lesions. A damage recognition complex composed of 2 UvrA and 2 UvrB subunits scans DNA for abnormalities. Upon binding of the UvrA(2)B(2) complex to a putative damaged site, the DNA wraps around one UvrB monomer. DNA wrap is dependent on ATP binding by UvrB and probably causes local melting of the DNA helix, facilitating insertion of UvrB beta-hairpin between the DNA strands. Then UvrB probes one DNA strand for the presence of a lesion. If a lesion is found the UvrA subunits dissociate and the UvrB-DNA preincision complex is formed. This complex is subsequently bound by UvrC and the second UvrB is released. If no lesion is found, the DNA wraps around the other UvrB subunit that will check the other stand for damage. This is UvrABC system protein B from Chlorobium phaeobacteroides (strain DSM 266 / SMG 266 / 2430).